Reading from the N-terminus, the 842-residue chain is Translation initiation factor IF-2 (842 aa).

The tract at residues 121–144 (TESTSVEKSESDDVTLEEESSKKV) is disordered. The region spanning 340–510 (PRAPVVTVMG…LLMAELLELK (171 aa)) is the tr-type G domain. The segment at 349-356 (GHVDHGKT) is G1. Position 349–356 (349–356 (GHVDHGKT)) interacts with GTP. The G2 stretch occupies residues 374-378 (GITQH). Positions 396–399 (DTPG) are G3. GTP-binding positions include 396-400 (DTPGH) and 450-453 (NKID). Residues 450–453 (NKID) are G4. Residues 486 to 488 (SAK) form a G5 region.

The protein belongs to the TRAFAC class translation factor GTPase superfamily. Classic translation factor GTPase family. IF-2 subfamily.

Its subcellular location is the cytoplasm. In terms of biological role, one of the essential components for the initiation of protein synthesis. Protects formylmethionyl-tRNA from spontaneous hydrolysis and promotes its binding to the 30S ribosomal subunits. Also involved in the hydrolysis of GTP during the formation of the 70S ribosomal complex. This is Translation initiation factor IF-2 from Ehrlichia chaffeensis (strain ATCC CRL-10679 / Arkansas).